The chain runs to 157 residues: Protein Smg homolog (157 aa).

This sequence belongs to the Smg family.

The chain is Protein Smg homolog from Shewanella halifaxensis (strain HAW-EB4).